The sequence spans 1233 residues: MNKKSHQQQVLQQQQQQQQQQFQQQHFQQQQQQQQFQQQQQQQQQLQQQQLQQQQQQQIQQQQQIQQQQQQQQQQQQQIQQQQQPQQIQQPQQQLPNFSVPIINQSIISNIKLYSTFETLLLSLSSTDTREQTKAIIYLSSLTINNKSNGIDLVYCIQKQLVVEAHNHIKVLLINLLGDISLDPFIDSFHILNKLLYLIRNEKSKKVLSSCLININKISKSLTFSKGNDVNSSSSSLINQIIEYIEPLLHSTSPLVRRETIVLLGSIVKNLDKESEEIQILLLNYLKDTDFRVREASLKSLSVIFQRGASLSVNKLYQSIILLLLDSFEQVRLECIKLIWIFGNIYPNHIVVSGGTKIRLVDDVFKKICNAVNDSSVIVRNCACKLLGCTYDVSLNYLIQTLSKEVMVWGKGKQYQIGHSSITKQRLQQKQQQQQQQQQQQQQQPPQQQPSQQPNQQPNQQQTNVSGTHIATPEGDFDVVGSDSLNILESGVIGAFIQGLEDEFYEVRSSAIDSMCELSVRNDEFAQKNIDFLVDIFNDEIESVRINSINSLRKIGNNVVIKEEQLHIILANLESSSKEERQSLHRLLTSIHLSNYSCLHATTQALLMNLSRYPYDIHSIFETLKIIGQTNPFTEFIVDDLLRIDPKFASVEPNMDDIFYVAVMVLVLNSCIKNRNILSLLPSFSFQHHLYFKDKYPKYFPQNLQKDSNIILAPTLKYSSVVNNNNNKNNNNNTTTTSIINDNGEINQFLNLTLSLLYGDNNNIINNNNTNNNNNNNNNNNNNNNNNNNNNNDENDENLNYGFQRLFLNQKKEIQLNKLFQECKRNFKRISSICLSLKPTSDFYNKYLKILTTIVSSSRRFKTITTSNQLNHLLYKLNHKFIGVDNNCKLILMEIGIYSFIIEILSTITLSTSSPPTTTTTTSSTSLFTSINSTPIELSNDQINQLTKKLNEYFKFSNDFKLEISTSIKSLLDLFNIKNNNINNNNNIINKKDKKLKENEENEENEENENNENENEKENGKNKEKEKNENDNENENENERPSKIQKTTSELIKTTTTTSTSTSTLIHYNLIEWTDNYIPPILKISNLIKKKSVDVILPIPNDKPIEFLDIFPLKLMINAKIENIRNLDSLFIQSTWQSIHTGQLNSQIHIIPKSAFTPTKPLSYNISCSIYLSLQNIRHNRLSSKESIPLRISIVEQFLNNNNNNNVTIIPLSKFVIFNILPVDNVNLLPNLI.

HEAT repeat units lie at residues 236 to 273 and 275 to 310; these read SLIN…NLDK and SEEI…RGAS. The tract at residues 426–473 is disordered; it reads RLQQKQQQQQQQQQQQQQQPPQQQPSQQPNQQPNQQQTNVSGTHIATP. Over residues 428–462 the composition is skewed to low complexity; the sequence is QQKQQQQQQQQQQQQQQPPQQQPSQQPNQQPNQQQ. HEAT repeat units follow at residues 487 to 524, 525 to 561, and 563 to 597; these read ILES…RNDE, FAQK…NVVI, and EEQL…SNYS. The segment covering 767 to 792 has biased composition (low complexity); it reads NNNTNNNNNNNNNNNNNNNNNNNNNN. Disordered regions lie at residues 767 to 796 and 993 to 1057; these read NNNT…DEND and DKKL…TTTT. Acidic residues predominate over residues 1000–1013; the sequence is EENEENEENENNEN. Residues 1014–1030 show a composition bias toward basic and acidic residues; the sequence is ENEKENGKNKEKEKNEN. The segment covering 1046 to 1057 has biased composition (low complexity); it reads KTTSELIKTTTT.

Belongs to the Integrator subunit 4 family. Component of the Integrator complex. The core complex associates with protein phosphatase 2A subunits, to form the Integrator-PP2A (INTAC) complex.

The protein localises to the nucleus. Its subcellular location is the cytoplasm. Its function is as follows. Component of the integrator complex, a multiprotein complex that terminates RNA polymerase II (Pol II) transcription in the promoter-proximal region of genes. The integrator complex provides a quality checkpoint during transcription elongation by driving premature transcription termination of transcripts that are unfavorably configured for transcriptional elongation: the complex terminates transcription by (1) catalyzing dephosphorylation of the C-terminal domain (CTD) of Pol II subunit polr2a, (2) degrading the exiting nascent RNA transcript via endonuclease activity and (3) promoting the release of Pol II from bound DNA. The integrator complex is also involved in terminating the synthesis of non-coding Pol II transcripts, such as enhancer RNAs (eRNAs), small nuclear RNAs (snRNAs), telomerase RNAs and long non-coding RNAs (lncRNAs). This chain is Integrator complex subunit 4 homolog (ints4), found in Dictyostelium discoideum (Social amoeba).